Reading from the N-terminus, the 75-residue chain is Small ribosomal subunit protein bS18 (75 aa).

It belongs to the bacterial ribosomal protein bS18 family. As to quaternary structure, part of the 30S ribosomal subunit. Forms a tight heterodimer with protein bS6.

Its function is as follows. Binds as a heterodimer with protein bS6 to the central domain of the 16S rRNA, where it helps stabilize the platform of the 30S subunit. This Desulforudis audaxviator (strain MP104C) protein is Small ribosomal subunit protein bS18.